The primary structure comprises 403 residues: Acetylornithine aminotransferase (403 aa).

Residues Gly-107–Ala-108 and Phe-140 contribute to the pyridoxal 5'-phosphate site. Arg-143 lines the N(2)-acetyl-L-ornithine pocket. Residue Asp-225–Gln-228 coordinates pyridoxal 5'-phosphate. Position 254 is an N6-(pyridoxal phosphate)lysine (Lys-254). Ser-282 lines the N(2)-acetyl-L-ornithine pocket. A pyridoxal 5'-phosphate-binding site is contributed by Thr-283.

This sequence belongs to the class-III pyridoxal-phosphate-dependent aminotransferase family. ArgD subfamily. In terms of assembly, homodimer. It depends on pyridoxal 5'-phosphate as a cofactor.

It is found in the cytoplasm. It carries out the reaction N(2)-acetyl-L-ornithine + 2-oxoglutarate = N-acetyl-L-glutamate 5-semialdehyde + L-glutamate. It participates in amino-acid biosynthesis; L-arginine biosynthesis; N(2)-acetyl-L-ornithine from L-glutamate: step 4/4. This chain is Acetylornithine aminotransferase, found in Vibrio cholerae serotype O1 (strain ATCC 39315 / El Tor Inaba N16961).